The following is a 108-amino-acid chain: Large ribosomal subunit protein uL24 (108 aa).

Belongs to the universal ribosomal protein uL24 family. In terms of assembly, part of the 50S ribosomal subunit.

In terms of biological role, one of two assembly initiator proteins, it binds directly to the 5'-end of the 23S rRNA, where it nucleates assembly of the 50S subunit. Its function is as follows. One of the proteins that surrounds the polypeptide exit tunnel on the outside of the subunit. In Geotalea daltonii (strain DSM 22248 / JCM 15807 / FRC-32) (Geobacter daltonii), this protein is Large ribosomal subunit protein uL24.